The following is a 677-amino-acid chain: DNA gyrase subunit B, novobiocin-resistant (677 aa).

Residues 1 to 23 (MTTYDTRTATDTRGSEQPGHVGT) form a disordered region. A novobiocin-binding region spans residues 154 to 295 (IWTDGHRWTQ…RLLSAEIALQ (142 aa)). A Toprim domain is found at 456-570 (SEIFIVEGDS…EGHVHLSRPP (115 aa)). Mg(2+) contacts are provided by Glu462, Asp535, and Asp537.

Belongs to the type II topoisomerase GyrB family. As to quaternary structure, heterotetramer, composed of two GyrA and two GyrB chains. In the heterotetramer, GyrA contains the active site tyrosine that forms a transient covalent intermediate with DNA, while GyrB binds cofactors and catalyzes ATP hydrolysis. Mg(2+) serves as cofactor. It depends on Mn(2+) as a cofactor. Ca(2+) is required as a cofactor.

It is found in the cytoplasm. It catalyses the reaction ATP-dependent breakage, passage and rejoining of double-stranded DNA.. Functionally, a type II topoisomerase that negatively supercoils closed circular double-stranded (ds) DNA in an ATP-dependent manner to modulate DNA topology and maintain chromosomes in an underwound state. Negative supercoiling favors strand separation, and DNA replication, transcription, recombination and repair, all of which involve strand separation. Also able to catalyze the interconversion of other topological isomers of dsDNA rings, including catenanes and knotted rings. Type II topoisomerases break and join 2 DNA strands simultaneously in an ATP-dependent manner. The sequence is that of DNA gyrase subunit B, novobiocin-resistant from Streptomyces niveus (Streptomyces spheroides).